We begin with the raw amino-acid sequence, 561 residues long: Reductase FVEG_12641 (561 aa).

Residues 1-26 form a disordered region; that stretch reads MGVQSTANLPKETVSHLDTAPTPKPG. One can recognise an MOSC domain in the interval 52 to 189; that stretch reads QQHDGPVFCS…ICKGDTISLL (138 aa). The FAD-binding FR-type domain maps to 237–342; sequence SAPKTYTLVD…PGSNPGAMEN (106 aa). FMN-binding positions include 288-289, 305-307, 313-316, and threonine 362; these read FE, GVS, and RGGS. Residues 474–561 form the 2Fe-2S ferredoxin-type domain; sequence FEVEVDEPDS…GIGRLRIEID (88 aa). Position 512 (cysteine 512) interacts with [2Fe-2S] cluster. Residue serine 514 participates in FMN binding. Cysteine 517, cysteine 520, and cysteine 548 together coordinate [2Fe-2S] cluster.

The protein belongs to the PDR/VanB family. As to quaternary structure, monomer. FMN serves as cofactor.

Its function is as follows. Reductase; part of the Fusarium detoxification of benzoxazolinone cluster 2 (FDB2) involved in the degradation of benzoxazolinones produced by the host plant. Maize, wheat, and rye produce the 2 benzoxazinone phytoanticipins 2,4-dihy-droxy-7-methoxy-1,4-benzoxazin-3-one (DIMBOA) and 2,4-dihydroxy-1,4-benzoxazin-3-one (DIBOA) that, due to their inherent instability once released, spontaneously degrade to the more stable corresponding benzoxazolinones, 6-methoxy-2-benzoxazolinone (MBOA) and 2-benzoxazolinone (BOA), respectively. The first step in the detoxification of benzoxazolinones involves the hydrolysis of the cyclic ester bond of benzoxazolinones by the FDB1 cluster gamma-lactamase MBL1 to aminophenols. MBL1 is able to convert BOA into 2-aminophenol (2-AP), as well as MBOA into 5-methoxy-2-aminophenol (2-AMP). The FDB2 cluster N-malonyltransferase FDB2/NAT1 then metabolizes aminophenols via N-malonylation to non-toxic malonamic acids. FDB2/NAT1 converts 2-AP into N-(2-hydroxyphenyl) malonamic acid (HPMA) and 2-AMP into N-(2-hydroxy-4-methoxyphenyl) malonamic acid (HMPMA). The duplicated dienlactone hydrolases DLH1 and DLH2 may provide redundant function for hydrolyzing the lactone moiety in the BOA molecule. The roles of the amidases an other enzymes encoded by the 2 FDB clusters have not been identified so far. The chain is Reductase FVEG_12641 from Gibberella moniliformis (strain M3125 / FGSC 7600) (Maize ear and stalk rot fungus).